The chain runs to 177 residues: Large ribosomal subunit protein uL6 (177 aa).

Residues 152-171 are compositionally biased toward basic and acidic residues; that stretch reads RPPEPYKGKGVRYDDEEVRR. Residues 152–177 form a disordered region; sequence RPPEPYKGKGVRYDDEEVRRKEAKKK.

This sequence belongs to the universal ribosomal protein uL6 family. In terms of assembly, part of the 50S ribosomal subunit.

Functionally, this protein binds to the 23S rRNA, and is important in its secondary structure. It is located near the subunit interface in the base of the L7/L12 stalk, and near the tRNA binding site of the peptidyltransferase center. The sequence is that of Large ribosomal subunit protein uL6 from Shewanella sp. (strain MR-4).